Here is a 1074-residue protein sequence, read N- to C-terminus: MTSLLKSSPGRRRGGDVESGKSEHADSDSDTFYIPSKNASIERLQQWRKAALVLNASRRFRYTLDLKKEQETREMRQKIRSHAHALLAANRFMDMGRESGVEKTTGPATPAGDFGITPEQLVIMSKDHNSGALEQYGGTQGLANLLKTNPEKGISGDDDDLLKRKTIYGSNTYPRKKGKGFLRFLWDACHDLTLIILMVAAVASLALGIKTEGIKEGWYDGGSIAFAVILVIVVTAVSDYKQSLQFQNLNDEKRNIHLEVLRGGRRVEISIYDIVVGDVIPLNIGNQVPADGVLISGHSLALDESSMTGESKIVNKDANKDPFLMSGCKVADGNGSMLVTGVGVNTEWGLLMASISEDNGEETPLQVRLNGVATFIGSIGLAVAAAVLVILLTRYFTGHTKDNNGGPQFVKGKTKVGHVIDDVVKVLTVAVTIVVVAVPEGLPLAVTLTLAYSMRKMMADKALVRRLSACETMGSATTICSDKTGTLTLNQMTVVESYAGGKKTDTEQLPATITSLVVEGISQNTTGSIFVPEGGGDLEYSGSPTEKAILGWGVKLGMNFETARSQSSILHAFPFNSEKKRGGVAVKTADGEVHVHWKGASEIVLASCRSYIDEDGNVAPMTDDKASFFKNGINDMAGRTLRCVALAFRTYEAEKVPTGEELSKWVLPEDDLILLAIVGIKDPCRPGVKDSVVLCQNAGVKVRMVTGDNVQTARAIALECGILSSDADLSEPTLIEGKSFREMTDAERDKISDKISVMGRSSPNDKLLLVQSLRRQGHVVAVTGDGTNDAPALHEADIGLAMGIAGTEVAKESSDIIILDDNFASVVKVVRWGRSVYANIQKFIQFQLTVNVAALVINVVAAISSGDVPLTAVQLLWVNLIMDTLGALALATEPPTDHLMGRPPVGRKEPLITNIMWRNLLIQAIYQVSVLLTLNFRGISILGLEHEVHEHATRVKNTIIFNAFVLCQAFNEFNARKPDEKNIFKGVIKNRLFMGIIVITLVLQVIIVEFLGKFASTTKLNWKQWLICVGIGVISWPLALVGKFIPVPAAPISNKLKVLKFWGKKKNSSGEGSL.

The segment at 1 to 33 (MTSLLKSSPGRRRGGDVESGKSEHADSDSDTFY) is disordered. The Cytoplasmic portion of the chain corresponds to 1 to 180 (MTSLLKSSPG…NTYPRKKGKG (180 aa)). A compositionally biased stretch (basic and acidic residues) spans 13-27 (RGGDVESGKSEHADS). The interaction with calmodulin stretch occupies residues 43-54 (RLQQWRKAALVL). Residues 181–201 (FLRFLWDACHDLTLIILMVAA) form a helical membrane-spanning segment. At 202-219 (VASLALGIKTEGIKEGWY) the chain is on the extracellular side. Residues 220-240 (DGGSIAFAVILVIVVTAVSDY) traverse the membrane as a helical segment. Topologically, residues 241–369 (KQSLQFQNLN…GEETPLQVRL (129 aa)) are cytoplasmic. A helical membrane pass occupies residues 370-389 (NGVATFIGSIGLAVAAAVLV). The Extracellular segment spans residues 390–426 (ILLTRYFTGHTKDNNGGPQFVKGKTKVGHVIDDVVKV). The chain crosses the membrane as a helical span at residues 427–444 (LTVAVTIVVVAVPEGLPL). Over 445 to 840 (AVTLTLAYSM…RWGRSVYANI (396 aa)) the chain is Cytoplasmic. Catalysis depends on Asp-482, which acts as the 4-aspartylphosphate intermediate. The Mg(2+) site is built by Asp-785 and Asp-789. The helical transmembrane segment at 841–859 (QKFIQFQLTVNVAALVINV) threads the bilayer. Topologically, residues 860–870 (VAAISSGDVPL) are extracellular. A helical membrane pass occupies residues 871–891 (TAVQLLWVNLIMDTLGALALA). The Cytoplasmic portion of the chain corresponds to 892–911 (TEPPTDHLMGRPPVGRKEPL). The helical transmembrane segment at 912-934 (ITNIMWRNLLIQAIYQVSVLLTL) threads the bilayer. Residues 935-949 (NFRGISILGLEHEVH) are Extracellular-facing. The chain crosses the membrane as a helical span at residues 950–971 (EHATRVKNTIIFNAFVLCQAFN). Residues 972–989 (EFNARKPDEKNIFKGVIK) lie on the Cytoplasmic side of the membrane. Residues 990 to 1011 (NRLFMGIIVITLVLQVIIVEFL) traverse the membrane as a helical segment. Residues 1012–1021 (GKFASTTKLN) lie on the Extracellular side of the membrane. The helical transmembrane segment at 1022 to 1043 (WKQWLICVGIGVISWPLALVGK) threads the bilayer. Topologically, residues 1044 to 1074 (FIPVPAAPISNKLKVLKFWGKKKNSSGEGSL) are cytoplasmic.

It belongs to the cation transport ATPase (P-type) (TC 3.A.3) family. Type IIB subfamily.

Its subcellular location is the cell membrane. The enzyme catalyses Ca(2+)(in) + ATP + H2O = Ca(2+)(out) + ADP + phosphate + H(+). Activated by calmodulin. Functionally, this magnesium-dependent enzyme catalyzes the hydrolysis of ATP coupled with the translocation of calcium from the cytosol out of the cell. This chain is Calcium-transporting ATPase 8, plasma membrane-type (ACA8), found in Arabidopsis thaliana (Mouse-ear cress).